The sequence spans 342 residues: 6-hydroxytryprostatin B O-methyltransferase (342 aa).

D201 contributes to the S-adenosyl-L-methionine binding site. H244 (proton acceptor) is an active-site residue.

Belongs to the class I-like SAM-binding methyltransferase superfamily. Cation-independent O-methyltransferase family. As to quaternary structure, homodimer.

It catalyses the reaction 6-hydroxytryprostatin B + S-adenosyl-L-methionine = tryprostatin A + S-adenosyl-L-homocysteine + H(+). Its pathway is mycotoxin biosynthesis. In terms of biological role, 6-hydroxytryprostatin B O-methyltransferase; part of the gene cluster that mediates the biosynthesis of fumitremorgins, indole alkaloids that carry not only intriguing chemical structures, but also interesting biological and pharmacological activities. The biosynthesis of fumitremorgin-type alkaloids begins by condensation of the two amino acids L-tryptophan and L-proline to brevianamide F, catalyzed by the non-ribosomal peptide synthetase ftmA. Brevianamide F is then prenylated by the prenyltransferase ftmPT1/ftmB in the presence of dimethylallyl diphosphate, resulting in the formation of tryprostatin B. The three cytochrome P450 monooxygenases, ftmP450-1/ftmC, ftmP450-2/ftmE and ftmP450-3/FtmG, are responsible for the conversion of tryprostatin B to 6-hydroxytryprostatin B, tryprostatin A to fumitremorgin C and fumitremorgin C to 12,13-dihydroxyfumitremorgin C, respectively. The putative methyltransferase ftmMT/ftmD is expected for the conversion of 6-hydroxytryprostatin B to tryprostatin A. FtmPT2/FtmH catalyzes the prenylation of 12,13-dihydroxyfumitre-morgin C in the presence of dimethylallyl diphosphate, resulting in the formation of fumitremorgin B. Fumitremorgin B is further converted to verruculogen by ftmOx1/ftmF via the insertion of an endoperoxide bond between the two prenyl moieties. In some fungal species, verruculogen is further converted to fumitremorgin A, but the enzymes involved in this step have not been identified yet. This chain is 6-hydroxytryprostatin B O-methyltransferase, found in Aspergillus fumigatus (strain ATCC MYA-4609 / CBS 101355 / FGSC A1100 / Af293) (Neosartorya fumigata).